The primary structure comprises 191 residues: Putative glutathione-dependent formaldehyde-activating enzyme (191 aa).

Positions 20–166 (FPGGNLYCKC…FHSLGLETYD (147 aa)) constitute a CENP-V/GFA domain. 7 residues coordinate Zn(2+): C27, C29, C48, C50, C53, C95, and C98.

It belongs to the Gfa family. Zn(2+) serves as cofactor.

It catalyses the reaction S-(hydroxymethyl)glutathione = glutathione + formaldehyde. It functions in the pathway one-carbon metabolism; formaldehyde degradation; formate from formaldehyde (glutathione route): step 1/3. Its function is as follows. Catalyzes the condensation of formaldehyde and glutathione to S-hydroxymethylglutathione. The sequence is that of Putative glutathione-dependent formaldehyde-activating enzyme from Aspergillus niger (strain ATCC MYA-4892 / CBS 513.88 / FGSC A1513).